We begin with the raw amino-acid sequence, 102 residues long: Synaptobrevin-like protein 5 (102 aa).

The v-SNARE coiled-coil homology domain maps to 17 to 77; the sequence is KIMRTRRELD…VKIKREMSWK (61 aa).

This Caenorhabditis elegans protein is Synaptobrevin-like protein 5 (snb-5).